Here is a 128-residue protein sequence, read N- to C-terminus: Small ribosomal subunit protein bS16 (128 aa).

Positions 107-128 are disordered; that stretch reads AAEAKAAAANESDDSGTDSTES. Over residues 117-128 the composition is skewed to acidic residues; it reads ESDDSGTDSTES.

The protein belongs to the bacterial ribosomal protein bS16 family.

The polypeptide is Small ribosomal subunit protein bS16 (Synechococcus sp. (strain CC9311)).